A 677-amino-acid polypeptide reads, in one-letter code: Probable sulfate transporter 4.2 (677 aa).

At 1-83 (MSLAVKDLST…RTYRWHQYFK (83 aa)) the chain is on the cytoplasmic side. A helical transmembrane segment spans residues 84-104 (LDLMAGITVGIMLVPQAMSYA). Residues 105 to 108 (RLAG) lie on the Extracellular side of the membrane. The helical transmembrane segment at 109–129 (LQPIYGLYSSFVPVFVYAVFG) threads the bilayer. At 130–133 (SSRQ) the chain is on the cytoplasmic side. The chain crosses the membrane as a helical span at residues 134–154 (LAVGPVALVSLLVSNALSGIV). Residues 155–161 (DPSEELY) are Extracellular-facing. The helical transmembrane segment at 162-182 (TELAILLALMVGIFESIMGFL) threads the bilayer. The Cytoplasmic portion of the chain corresponds to 183–189 (RLGWLIR). The helical transmembrane segment at 190 to 210 (FISHSVISGFTTASAVVIGLS) threads the bilayer. Residues 211 to 241 (QLKYFLGYSVSRSSKIMPVIDSIIAGADQFK) lie on the Extracellular side of the membrane. The helical transmembrane segment at 242–262 (WPPFLLGCTILVILLVMKHVG) threads the bilayer. Residues 263–269 (KAKKELR) lie on the Cytoplasmic side of the membrane. Residues 270 to 290 (FIRAAGPLTGLALGTIIAKVF) traverse the membrane as a helical segment. Residues 291–318 (HPPSITLVGDIPQGLPKFSFPKSFDHAK) lie on the Extracellular side of the membrane. Residues 319 to 339 (LLLPTSALITGVAILESVGIA) traverse the membrane as a helical segment. Residues 340–355 (KALAAKNRYELDSNSE) lie on the Cytoplasmic side of the membrane. Residues 356 to 376 (LFGLGVANIFGSLFSAYPTTG) traverse the membrane as a helical segment. The Extracellular segment spans residues 377–392 (SFSRSAVNSESEAKTG). The chain crosses the membrane as a helical span at residues 393–413 (LSGLVTGIIIGCSLLFLTPMF). At 414-420 (KFIPQCA) the chain is on the cytoplasmic side. A helical membrane pass occupies residues 421–441 (LAAIVISAVSGLVDYEGAIFL). Topologically, residues 442–459 (WRVDKRDFTLWTITSTTT) are extracellular. A helical transmembrane segment spans residues 460 to 480 (LFFGIEIGVLIGVGFSLAFVI). At 481 to 677 (HESANPHIAV…LEEPLLSREK (197 aa)) the chain is on the cytoplasmic side. The STAS domain occupies 505 to 629 (QYPEAYTYNG…VRVHDAVQVC (125 aa)).

The protein belongs to the SLC26A/SulP transporter (TC 2.A.53) family.

The protein localises to the membrane. H(+)/sulfate cotransporter that may play a role in the regulation of sulfate assimilation. The chain is Probable sulfate transporter 4.2 (SULTR4;2) from Arabidopsis thaliana (Mouse-ear cress).